Consider the following 61-residue polypeptide: Temporin-SN2 (61 aa).

The N-terminal stretch at 1 to 22 is a signal peptide; it reads MFTLKKTLLLLFFLGTINLSLC. The propeptide at 23-44 is removed in mature form; it reads EEERNAEEERRDGDDEMDVEVK. Lys61 carries the lysine amide modification.

This sequence belongs to the frog skin active peptide (FSAP) family. Temporin subfamily. Expressed by the skin glands.

Its subcellular location is the secreted. Its function is as follows. Antimicrobial peptide. Active against some Gram-positive and Gram-negative bacterial strains. Active against fungus C.glabrata 090902 but not against C.albicans ATCC 12231. Shows very weak hemolytic activity against human erythrocytes. The sequence is that of Temporin-SN2 from Sylvirana spinulosa (Fine-spined frog).